Reading from the N-terminus, the 273-residue chain is Putative phosphoenolpyruvate synthase regulatory protein (273 aa).

Position 153-160 (153-160) interacts with ADP; the sequence is GVSRSGKT.

It belongs to the pyruvate, phosphate/water dikinase regulatory protein family. PSRP subfamily.

It catalyses the reaction [pyruvate, water dikinase] + ADP = [pyruvate, water dikinase]-phosphate + AMP + H(+). The catalysed reaction is [pyruvate, water dikinase]-phosphate + phosphate + H(+) = [pyruvate, water dikinase] + diphosphate. Its function is as follows. Bifunctional serine/threonine kinase and phosphorylase involved in the regulation of the phosphoenolpyruvate synthase (PEPS) by catalyzing its phosphorylation/dephosphorylation. This chain is Putative phosphoenolpyruvate synthase regulatory protein, found in Verminephrobacter eiseniae (strain EF01-2).